The primary structure comprises 899 residues: Protein translocase subunit SecA (899 aa).

ATP contacts are provided by residues glutamine 87, 105-109 (GEGKT), and aspartate 512. The segment at 846–899 (MEEEQQQQAQKKIVFNLGEEPATAPQPARSKKSASRNDPCPCGSGKKYKKCCGK) is disordered. Residues cysteine 885, cysteine 887, cysteine 896, and cysteine 897 each coordinate Zn(2+).

This sequence belongs to the SecA family. As to quaternary structure, monomer and homodimer. Part of the essential Sec protein translocation apparatus which comprises SecA, SecYEG and auxiliary proteins SecDF-YajC and YidC. It depends on Zn(2+) as a cofactor.

The protein localises to the cell inner membrane. It is found in the cytoplasm. It catalyses the reaction ATP + H2O + cellular proteinSide 1 = ADP + phosphate + cellular proteinSide 2.. Part of the Sec protein translocase complex. Interacts with the SecYEG preprotein conducting channel. Has a central role in coupling the hydrolysis of ATP to the transfer of proteins into and across the cell membrane, serving as an ATP-driven molecular motor driving the stepwise translocation of polypeptide chains across the membrane. In Geobacter metallireducens (strain ATCC 53774 / DSM 7210 / GS-15), this protein is Protein translocase subunit SecA.